The primary structure comprises 307 residues: Hepatitis A virus cellular receptor 1 homolog (307 aa).

The first 21 residues, 1-21 (MVQLQVFISGLLLLLPGSVDS), serve as a signal peptide directing secretion. Positions 22-124 (YEVVKGVVGH…WFNDQKMTFS (103 aa)) constitute an Ig-like V-type domain. The Extracellular portion of the chain corresponds to 22 to 235 (YEVVKGVVGH…RKPQRNPTKG (214 aa)). Disulfide bonds link Cys-37–Cys-108, Cys-49–Cys-60, and Cys-55–Cys-107. The interval 129–177 (PEIPTSPPTRPTTTRPTTTRPTTISTRSTHVPTSTRVSTSTPTPEQTQT) is disordered. Positions 139–175 (PTTTRPTTTRPTTISTRSTHVPTSTRVSTSTPTPEQT) are enriched in low complexity. N-linked (GlcNAc...) asparagine glycosylation occurs at Asn-206. The chain crosses the membrane as a helical span at residues 236-256 (FYVGMSVAALLLLLLASTVVV). The Cytoplasmic segment spans residues 257-307 (TRYIIIRKKMGSLSFVAFHVSKSRALQNAAIVHPRAEDNIYIIEDRSRGAE).

The protein belongs to the immunoglobulin superfamily. TIM family. Interacts with STAM. Interacts with SELPLG. Expressed at a low level in normal kidney but are increased dramatically in postischemic kidney. Expressed in proliferating bromodeoxyuridine-positive and dedifferentiated vimentin-positive epithelial cells in regenerating proximal tubules.

It localises to the cell membrane. Its function is as follows. Phosphatidylserine receptor that plays an important functional role in regulatory B-cells homeostasis including generation, expansion and suppressor functions. As P-selectin/SELPLG ligand, plays a specialized role in activated but not naive T-cell trafficking during inflammatory responses. Controls thereby T-cell accumulation in the inflamed central nervous system (CNS) and the induction of autoimmune disease. Also regulates expression of various anti-inflammatory cytokines and co-inhibitory ligands including IL10. Acts as a regulator of T-cell proliferation. May play a role in kidney injury and repair. The sequence is that of Hepatitis A virus cellular receptor 1 homolog (Havcr1) from Rattus norvegicus (Rat).